A 368-amino-acid chain; its full sequence is MLDSSLAQEIAAIDGVELDSKVTFADLTTLRIGGKPRSAVRCQTTEALVSAIKLLDDASLPLLIVGGGSNLVVADGDLDVIAVIIETDDVSINLTDGLLTADAGAVWDDVVHLSVDAGLGGIECLSGIPGSAGATPVQNVGAYGTEVSDVLTRVQLLDRTTHQVSWVDASELDLSYRYSNLKFTNRAVVLAIELQLLTDGLSAPLRFGELGRRLAISEAEPHPRRPVRMVRDAVLELRRAKGMVVEHTDHDTWSAGSFFTNPIVDPALADAVFEKVGEPTMPRFPAGDGKEKLSAAWLIERAGFKKGHPGAGAKASLSTKHTLALTNRGDARASDLVALAKEIRDGVLETFGVTLVPEPVWIGISIDD.

Positions 32–199 (IGGKPRSAVR…LAIELQLLTD (168 aa)) constitute an FAD-binding PCMH-type domain. Arg-177 is an active-site residue. Ser-257 acts as the Proton donor in catalysis. The active site involves Glu-358.

This sequence belongs to the MurB family. Requires FAD as cofactor.

The protein resides in the cytoplasm. It carries out the reaction UDP-N-acetyl-alpha-D-muramate + NADP(+) = UDP-N-acetyl-3-O-(1-carboxyvinyl)-alpha-D-glucosamine + NADPH + H(+). It functions in the pathway cell wall biogenesis; peptidoglycan biosynthesis. In terms of biological role, cell wall formation. This chain is UDP-N-acetylenolpyruvoylglucosamine reductase, found in Corynebacterium glutamicum (strain R).